The primary structure comprises 452 residues: Fructose-2,6-bisphosphatase (452 aa).

The tract at residues 1 to 223 (MGYSTISNDN…VFYVMNIRPK (223 aa)) is 6-phosphofructo-2-kinase. An ATP-binding site is contributed by 20–28 (GLPARGKSF). Positions 53 and 78 each coordinate beta-D-fructose 6-phosphate. The active site involves aspartate 104. Positions 106 and 112 each coordinate beta-D-fructose 6-phosphate. 143–148 (NAKDIG) is an ATP binding site. 2 residues coordinate beta-D-fructose 6-phosphate: arginine 169 and tyrosine 173. A fructose-2,6-bisphosphatase region spans residues 224–452 (PKYIWLSRHG…LNDSPLEDKF (229 aa)). Residue arginine 231 participates in beta-D-fructose 2,6-bisphosphate binding. The active-site Tele-phosphohistidine intermediate is histidine 232. The beta-D-fructose 2,6-bisphosphate site is built by asparagine 238 and glycine 244. The active-site Proton donor/acceptor is the glutamate 302. Beta-D-fructose 2,6-bisphosphate contacts are provided by tyrosine 313, arginine 327, lysine 331, tyrosine 342, glutamine 368, and arginine 372. Residue 324-327 (FKAR) participates in ATP binding. ATP-binding positions include 368–372 (QAVLR) and tyrosine 404. Phosphoserine is present on residues serine 435 and serine 446.

In the C-terminal section; belongs to the phosphoglycerate mutase family.

It catalyses the reaction beta-D-fructose 2,6-bisphosphate + H2O = beta-D-fructose 6-phosphate + phosphate. Its activity is regulated as follows. Inhibited by fructose 6-P, activated by glycerol 3-P. In terms of biological role, monofunctional, high-specificity fructose-2,6-bisphosphatase, which releases phosphate from the 2-position of fructose 2,6-bisphosphate. Has no detectable 6-phosphofructo-2-kinase activity. The protein is Fructose-2,6-bisphosphatase of Saccharomyces cerevisiae (strain ATCC 204508 / S288c) (Baker's yeast).